We begin with the raw amino-acid sequence, 1196 residues long: Chromosome partition protein Smc (1196 aa).

32-39 (PNGSGKSN) is an ATP binding site. Coiled-coil stretches lie at residues 168–288 (LKHR…SVQQ) and 327–497 (DALE…LERK). Residues 510 to 621 (AGILGPMAKL…VDDLDRALAL (112 aa)) form the SMC hinge domain. Coiled coils occupy residues 654-829 (LEVT…RAQQ) and 972-1026 (DRPT…KDLL).

It belongs to the SMC family. As to quaternary structure, homodimer.

The protein localises to the cytoplasm. Required for chromosome condensation and partitioning. This Mycolicibacterium paratuberculosis (strain ATCC BAA-968 / K-10) (Mycobacterium paratuberculosis) protein is Chromosome partition protein Smc.